Reading from the N-terminus, the 161-residue chain is 2-C-methyl-D-erythritol 2,4-cyclodiphosphate synthase (161 aa).

Positions 8 and 10 each coordinate a divalent metal cation. 4-CDP-2-C-methyl-D-erythritol 2-phosphate-binding positions include 8–10 (DLH) and 34–35 (HS). Residue His-42 coordinates a divalent metal cation. 4-CDP-2-C-methyl-D-erythritol 2-phosphate contacts are provided by residues 56-58 (DIG) and Arg-142.

This sequence belongs to the IspF family. Homotrimer. A divalent metal cation is required as a cofactor.

It carries out the reaction 4-CDP-2-C-methyl-D-erythritol 2-phosphate = 2-C-methyl-D-erythritol 2,4-cyclic diphosphate + CMP. It functions in the pathway isoprenoid biosynthesis; isopentenyl diphosphate biosynthesis via DXP pathway; isopentenyl diphosphate from 1-deoxy-D-xylulose 5-phosphate: step 4/6. Functionally, involved in the biosynthesis of isopentenyl diphosphate (IPP) and dimethylallyl diphosphate (DMAPP), two major building blocks of isoprenoid compounds. Catalyzes the conversion of 4-diphosphocytidyl-2-C-methyl-D-erythritol 2-phosphate (CDP-ME2P) to 2-C-methyl-D-erythritol 2,4-cyclodiphosphate (ME-CPP) with a corresponding release of cytidine 5-monophosphate (CMP). This chain is 2-C-methyl-D-erythritol 2,4-cyclodiphosphate synthase, found in Treponema denticola (strain ATCC 35405 / DSM 14222 / CIP 103919 / JCM 8153 / KCTC 15104).